A 212-amino-acid chain; its full sequence is Ribonuclease HII (212 aa).

Residues glycine 22–threonine 211 enclose the RNase H type-2 domain. Aspartate 28, glutamate 29, and aspartate 120 together coordinate a divalent metal cation.

It belongs to the RNase HII family. The cofactor is Mn(2+). Mg(2+) serves as cofactor.

Its subcellular location is the cytoplasm. The enzyme catalyses Endonucleolytic cleavage to 5'-phosphomonoester.. Endonuclease that specifically degrades the RNA of RNA-DNA hybrids. The protein is Ribonuclease HII of Shewanella frigidimarina (strain NCIMB 400).